The primary structure comprises 392 residues: Phosphoglycerate kinase (392 aa).

Substrate contacts are provided by residues 21-23 (DMN), arginine 36, 59-62 (HLGR), arginine 114, and arginine 147. ATP contacts are provided by residues lysine 198, glutamate 320, and 346–349 (GGDT).

This sequence belongs to the phosphoglycerate kinase family. In terms of assembly, monomer.

The protein resides in the cytoplasm. It catalyses the reaction (2R)-3-phosphoglycerate + ATP = (2R)-3-phospho-glyceroyl phosphate + ADP. It functions in the pathway carbohydrate degradation; glycolysis; pyruvate from D-glyceraldehyde 3-phosphate: step 2/5. The chain is Phosphoglycerate kinase from Neisseria meningitidis serogroup C / serotype 2a (strain ATCC 700532 / DSM 15464 / FAM18).